The primary structure comprises 855 residues: DNA mismatch repair protein MutS (855 aa).

Residue 616-623 participates in ATP binding; it reads GPNMGGKS.

This sequence belongs to the DNA mismatch repair MutS family.

Functionally, this protein is involved in the repair of mismatches in DNA. It is possible that it carries out the mismatch recognition step. This protein has a weak ATPase activity. In Escherichia coli O139:H28 (strain E24377A / ETEC), this protein is DNA mismatch repair protein MutS.